The sequence spans 216 residues: EFGSYVYLGEMITNIPFPPDSPIEDRCGSCNICVDSCPTGALVQGGQLDSKKCIAFLTQTKGFLPDEYRGKIGNRLYGCDTCQLVCPENKGKDFHIHSEMEPDPEIAKPKLKPLLHISNREFKEKFGHIAGSWRGKKPIQRNAIIALAHYKDRTALPDLIKLMHEDSRPIIRGTAAWAIGRIGDQSVLFELEKALEKEQDEEVKNEIVKGIEMLKA.

The region spanning proline 18 to glutamine 47 is the 4Fe-4S ferredoxin-type domain. Residues cysteine 27, cysteine 30, cysteine 33, cysteine 37, cysteine 79, cysteine 82, and cysteine 86 each coordinate [4Fe-4S] cluster.

This is an uncharacterized protein from Geobacillus stearothermophilus (Bacillus stearothermophilus).